Reading from the N-terminus, the 1755-residue chain is MASEMEPEVQAIDRSLLECSAEEIAGRWLQATDLNREVYQHLAHCVPKIYCRGPNPFPQKEDTLAQHILLGPMEWYICAEDPALGFPKLEQANKPSHLCGRVFKVGEPTYSCRDCAVDPTCVLCMECFLGSIHRDHRYRMTTSGGGGFCDCGDTEAWKEGPYCQKHKLSSSEVVEEEDPLVHLSEDVIARTYNIFAIMFRYAVDILTWEKESELPEDLEVAEKSDTYYCMLFNDEVHTYEQVIYTLQKAVNCTQKEAIGFATTVDRDGRRSVRYGDFQYCDQAKTVIVRNTSRQTKPLKVQVMHSSVAAHQNFGLKALSWLGSVIGYSDGLRRILCQVGLQEGPDGENSSLVDRLMLNDSKLWKGARSVYHQLFMSSLLMDLKYKKLFALRFAKNYRQLQRDFMEDDHERAVSVTALSVQFFTAPTLARMLLTEENLMTVIIKAFMDHLKHRDAQGRFQFERYTALQAFKFRRVQSLILDLKYVLISKPTEWSDELRQKFLQGFDAFLELLKCMQGMDPITRQVGQHIEMEPEWEAAFTLQMKLTHVISMVQDWCALDEKVLIEAYKKCLAVLTQCHGGFTDGEQPITLSICGHSVETIRYCVSQEKVSIHLPISRLLAGLHVLLSKSEVAYKFPELLPLSELSPPMLIEHPLRCLVLCAQVHAGMWRRNGFSLVNQIYYYHNVKCRREMFDKDIVMLQTGVSMMDPNHFLMIMLSRFELYQLFSTPDYGKRFSSEVTHKDVVQQNNTLIEEMLYLIIMLVGERFNPGVGQVAATDEIKREIIHQLSIKPMAHSELVKSLPEDENKETGMESVIESVAHFKKPGLTGRGMYELKPECAKEFNLYFYHFSRAEQSKAEEAQRKLKRENKEDTALPPPALPPFCPLFASLVNILQCDVMLYIMGTILQWAVEHHGSAWSESMLQRVLHLIGMALQEEKHHLENAVEGHVQTFTFTQKISKPGDAPHNSPSILAMLETLQNAPSLEAHKDMIRWLLKMFNAIKKIRECSSSSPVAEAEGTIMEESSRDKDKAERKRKAEIARLRREKIMAQMSEMQRHFIDENKELFQQTLELDTSASATLDSSPPVSDAALTALGPAQTQVPEPRQFVTCILCQEEQEVTVGSRAMVLAAFVQRSTVLSKDRTKTIADPEKYDPLFMHPDLSCGTHTGSCGHVMHAHCWQRYFDSVQAKEQRRQQRLRLHTSYDVENGEFLCPLCECLSNTVIPLLLPPRSILSRRLNFSDQPDLAQWTRAVTQQIKVVQMLRRKHNAADTSSSEDTEAMNIIPIPEGFRPDFYPRNPYSDSIKEMLTTFGTAAYKVGLKVHPNEGDPRVPILCWGTCAYTIQSIERILSDEEKPVFGPLPCRLDDCLRSLTRFAAAHWTVALLPVVQGHFCKLFASLVPSDSYEDLPCILDIDMFHLLVGLVLAFPALQCQDFSGSSLATGDLHIFHLVTMAHIVQILLTSCTEENGMDQENPTGEEELAILSLHKTLHQYTGSALKEAPSGWHLWRSVRAAIMPFLKCSALFFHYLNGVPAPPDLQVSGTSHFEHLCNYLSLPTNLIHLFQENSDIMNSLIESWCQNSEVKRYLNGERGAISYPRGANKLIDLPEDYSSLINQASNFSCPKSGGDKSRAPTLCLVCGSLLCSQSYCCQAELEGEDVGACTAHTYSCGSGAGIFLRVRECQVLFLAGKTKGCFYSPPYLDDYGETDQGLRRGNPLHLCQERFRKIQKLWQQHSITEEIGHAQEANQTLVGIDWQHL.

An N-acetylalanine modification is found at A2. Residue K94 forms a Glycyl lysine isopeptide (Lys-Gly) (interchain with G-Cter in ubiquitin) linkage. Residues H97–L168 form a UBR-type zinc finger. Positions 99, 112, 115, 124, 127, 133, and 136 each coordinate Zn(2+). F148 is a binding site for a peptide. C149 lines the Zn(2+) pocket. An a peptide-binding site is contributed by D150. C151 provides a ligand contact to Zn(2+). An a peptide-binding site is contributed by D153. K158 participates in a covalent cross-link: Glycyl lysine isopeptide (Lys-Gly) (interchain with G-Cter in ubiquitin). C163 is a Zn(2+) binding site. K165 participates in a covalent cross-link: Glycyl lysine isopeptide (Lys-Gly) (interchain with G-Cter in ubiquitin). Position 166 (H166) interacts with Zn(2+). Residues K248, K255, and K470 each participate in a glycyl lysine isopeptide (Lys-Gly) (interchain with G-Cter in ubiquitin) cross-link. Phosphoserine is present on S476. Glycyl lysine isopeptide (Lys-Gly) (interchain with G-Cter in ubiquitin) cross-links involve residues K488, K568, K779, and K789. The interval A1012 to R1033 is disordered. Residues M1019–R1054 adopt a coiled-coil conformation. Basic and acidic residues predominate over residues E1021–R1033. Zn(2+) contacts are provided by C1108, C1111, C1168, H1170, H1173, C1176, C1210, and C1213. The RING-type; atypical zinc-finger motif lies at C1108–E1214. Glycyl lysine isopeptide (Lys-Gly) (interchain with G-Cter in ubiquitin) cross-links involve residues K1496, K1599, and K1689. S1694 is modified (phosphoserine). Residue Y1697 is modified to Phosphotyrosine.

This sequence belongs to the E3 ubiquitin-protein ligase UBR1-like family. As to quaternary structure, interacts with UBE2B; promotes the UBE2B-H2A interaction and the ubiquitination of histone H2A by UBE2B and UBR2. Interacts with RECQL4. Interacts with Tex19.1 and Tex19.2; does not lead to Tex19.1 degradation and stabilizes it. Interacts with L1RE1. Interacts with CASP8. Interacts with ATXN3. Interacts with UBE2O. Dephosphorylated by DUSP22 at Ser-1694 and Tyr-1697, leading to subsequent ubiquitination and proteasomal degradation. Post-translationally, 'Lys-48'-linked ubiquitinated at Lys-94, Lys-779 and Lys-1599 following DUSP22-mediated dephosphorylation of Ser-1694 and Tyr-1697 which promotes UBR2 interaction with the SCF(FBW1A) E3 ubiquitin-protein ligase complex. Highly expressed in skeletal muscle. Also expressed in heart, kidney and testis. Expressed in acinar cells of the pancreas. In testes, expressed primarily in spermatocytes. Expressed in cerebellum.

The protein localises to the nucleus. Its subcellular location is the chromosome. It carries out the reaction S-ubiquitinyl-[E2 ubiquitin-conjugating enzyme]-L-cysteine + [acceptor protein]-L-lysine = [E2 ubiquitin-conjugating enzyme]-L-cysteine + N(6)-ubiquitinyl-[acceptor protein]-L-lysine.. It functions in the pathway protein modification; protein ubiquitination. E3 ubiquitin-protein ligase which is a component of the N-end rule pathway. Recognizes and binds to proteins bearing specific N-terminal residues (N-degrons) that are destabilizing according to the N-end rule, leading to their ubiquitination and subsequent degradation. Recognizes both type-1 and type-2 N-degrons, containing positively charged amino acids (Arg, Lys and His) and bulky and hydrophobic amino acids, respectively. Does not ubiquitinate proteins that are acetylated at the N-terminus. In contrast, it strongly binds methylated N-degrons. Plays a critical role in chromatin inactivation and chromosome-wide transcriptional silencing during meiosis via ubiquitination of histone H2A. Binds leucine and is a negative regulator of the leucine-mTOR signaling pathway, thereby controlling cell growth. Required for spermatogenesis, promotes, with Tex19.1, SPO11-dependent recombination foci to accumulate and drive robust homologous chromosome synapsis. Polyubiquitinates LINE-1 retrotransposon encoded, LIRE1, which induces degradation, inhibiting LINE-1 retrotransposon mobilization. Catalyzes ubiquitination and degradation of the N-terminal part of NLRP1B following NLRP1B activation by pathogens and other damage-associated signals: ubiquitination promotes degradation of the N-terminal part and subsequent release of the cleaved C-terminal part of NLRP1B, which polymerizes and forms the NLRP1B inflammasome followed by host cell pyroptosis. Plays a role in T-cell receptor signaling by inducing 'Lys-63'-linked ubiquitination of lymphocyte cell-specific kinase LCK. This activity is regulated by DUSP22, which induces 'Lys-48'-linked ubiquitination of UBR2, leading to its proteasomal degradation by SCF E3 ubiquitin-protein ligase complex. The chain is E3 ubiquitin-protein ligase UBR2 from Mus musculus (Mouse).